Reading from the N-terminus, the 224-residue chain is Coiled-coil domain-containing protein 43 (224 aa).

K95 participates in a covalent cross-link: Glycyl lysine isopeptide (Lys-Gly) (interchain with G-Cter in SUMO1). Coiled coils occupy residues 121–145 (SEEE…EDEA) and 177–218 (RKLE…KRTQ). Over residues 138-149 (VTDEEDEADEKD) the composition is skewed to acidic residues. Disordered stretches follow at residues 138–157 (VTDE…TTMN) and 176–224 (ARKL…ERKR). Position 139 is a phosphothreonine (T139). Basic and acidic residues predominate over residues 176–211 (ARKLERDSLRDESQRKKEQDKLQRERDKLAKQERKE). Residues 212 to 224 (KEKKRTQRGERKR) show a composition bias toward basic residues.

It belongs to the CCDC43 family.

In Homo sapiens (Human), this protein is Coiled-coil domain-containing protein 43 (CCDC43).